A 393-amino-acid chain; its full sequence is Probable protein phosphatase 2C 72 (393 aa).

A PPM-type phosphatase domain is found at E49–F357. Positions 88 and 89 each coordinate Mn(2+). Residues L147 to A167 form a helical membrane-spanning segment. Mn(2+)-binding residues include D289 and D348.

The protein belongs to the PP2C family. Mg(2+) is required as a cofactor. Mn(2+) serves as cofactor.

The protein localises to the membrane. It carries out the reaction O-phospho-L-seryl-[protein] + H2O = L-seryl-[protein] + phosphate. It catalyses the reaction O-phospho-L-threonyl-[protein] + H2O = L-threonyl-[protein] + phosphate. The polypeptide is Probable protein phosphatase 2C 72 (Oryza sativa subsp. japonica (Rice)).